Consider the following 94-residue polypeptide: Signal peptidase complex subunit 1 (94 aa).

N-acetylserine is present on Ser-2. At 2-28 (SEILQDVQRKLVFPIDFPSQRKTEKFQ) the chain is on the cytoplasmic side. The chain crosses the membrane as a helical span at residues 29 to 49 (QLSLMIGALVACILGFAQQSL). A topological domain (lumenal) is located at residue Lys-50. The chain crosses the membrane as a helical span at residues 51-71 (VLLTAYGISCVITLICVLPAY). At 72–94 (PWYNKQKLRWAQPKIEINVDQYD) the chain is on the cytoplasmic side.

Belongs to the SPCS1 family. As to quaternary structure, component of the signal peptidase complex (SPC) composed of a catalytic subunit SEC11 and three accessory subunits SPC1, SPC2 and SPC3. The complex induces a local thinning of the ER membrane which is used to measure the length of the signal peptide (SP) h-region of protein substrates. This ensures the selectivity of the complex towards h-regions shorter than 18-20 amino acids. SPC associates with the translocon complex. Interacts with SBH1 and SEB2/SBH2.

It is found in the endoplasmic reticulum membrane. In terms of biological role, component of the signal peptidase complex (SPC) which catalyzes the cleavage of N-terminal signal sequences from nascent proteins as they are translocated into the lumen of the endoplasmic reticulum. Dispensable for SPC enzymatic activity. In Saccharomyces cerevisiae (strain ATCC 204508 / S288c) (Baker's yeast), this protein is Signal peptidase complex subunit 1 (SPC1).